The primary structure comprises 90 residues: UPF0298 protein YlbG (90 aa).

The protein belongs to the UPF0298 family.

It is found in the cytoplasm. In Bacillus subtilis (strain 168), this protein is UPF0298 protein YlbG (ylbG).